The primary structure comprises 170 residues: MPNADSRFGRLGWLVLSLLVLVIDQVSKAHFEGSLEMFQQIVVIPDYFSWTLAYNTGAAFSFLADGGGWQRWLFAVIAVVVSAVLVVWLKRLGRDDTWLAIALALVLGGALGNLYDRIALGHVIDFILVHWQNRHYFPAFNFADSAITVGAIMLALDMFKSKKTGETVND.

A run of 4 helical transmembrane segments spans residues 11–31 (LGWL…KAHF), 41–61 (IVVI…AAFS), 69–89 (WQRW…VVWL), and 95–115 (DDTW…GNLY). Active-site residues include Asp125 and Asp144. The chain crosses the membrane as a helical span at residues 136 to 156 (YFPAFNFADSAITVGAIMLAL).

It belongs to the peptidase A8 family.

The protein localises to the cell inner membrane. It carries out the reaction Release of signal peptides from bacterial membrane prolipoproteins. Hydrolyzes -Xaa-Yaa-Zaa-|-(S,diacylglyceryl)Cys-, in which Xaa is hydrophobic (preferably Leu), and Yaa (Ala or Ser) and Zaa (Gly or Ala) have small, neutral side chains.. The protein operates within protein modification; lipoprotein biosynthesis (signal peptide cleavage). Its function is as follows. This protein specifically catalyzes the removal of signal peptides from prolipoproteins. This is Lipoprotein signal peptidase from Pseudomonas fluorescens.